Consider the following 368-residue polypeptide: Endoglucanase (368 aa).

Residues 1–21 (MNVLRSGIVTMLLLAAFSVQA) form the signal peptide. Glu-55 serves as the catalytic Proton donor. Catalysis depends on Asp-116, which acts as the Nucleophile.

It belongs to the glycosyl hydrolase 8 (cellulase D) family.

The protein resides in the secreted. The enzyme catalyses Endohydrolysis of (1-&gt;4)-beta-D-glucosidic linkages in cellulose, lichenin and cereal beta-D-glucans.. Its pathway is glycan metabolism; bacterial cellulose biosynthesis. Its function is as follows. Hydrolyzes carboxymethylcellulose. The protein is Endoglucanase (bcsZ) of Escherichia coli (strain K12).